Consider the following 254-residue polypeptide: Imidazole glycerol phosphate synthase subunit HisF (254 aa).

Catalysis depends on residues aspartate 11 and aspartate 130.

The protein belongs to the HisA/HisF family. In terms of assembly, heterodimer of HisH and HisF.

The protein localises to the cytoplasm. The enzyme catalyses 5-[(5-phospho-1-deoxy-D-ribulos-1-ylimino)methylamino]-1-(5-phospho-beta-D-ribosyl)imidazole-4-carboxamide + L-glutamine = D-erythro-1-(imidazol-4-yl)glycerol 3-phosphate + 5-amino-1-(5-phospho-beta-D-ribosyl)imidazole-4-carboxamide + L-glutamate + H(+). The protein operates within amino-acid biosynthesis; L-histidine biosynthesis; L-histidine from 5-phospho-alpha-D-ribose 1-diphosphate: step 5/9. Functionally, IGPS catalyzes the conversion of PRFAR and glutamine to IGP, AICAR and glutamate. The HisF subunit catalyzes the cyclization activity that produces IGP and AICAR from PRFAR using the ammonia provided by the HisH subunit. The protein is Imidazole glycerol phosphate synthase subunit HisF of Laribacter hongkongensis (strain HLHK9).